A 230-amino-acid polypeptide reads, in one-letter code: Orotidine 5'-phosphate decarboxylase (230 aa).

Residues aspartate 10, lysine 31, 58 to 67 (DLKLHDIPNT), threonine 117, arginine 179, glutamine 188, glycine 208, and arginine 209 each bind substrate. Lysine 60 functions as the Proton donor in the catalytic mechanism.

Belongs to the OMP decarboxylase family. Type 1 subfamily. In terms of assembly, homodimer.

The catalysed reaction is orotidine 5'-phosphate + H(+) = UMP + CO2. It participates in pyrimidine metabolism; UMP biosynthesis via de novo pathway; UMP from orotate: step 2/2. In terms of biological role, catalyzes the decarboxylation of orotidine 5'-monophosphate (OMP) to uridine 5'-monophosphate (UMP). This is Orotidine 5'-phosphate decarboxylase from Staphylococcus aureus (strain Mu3 / ATCC 700698).